Consider the following 296-residue polypeptide: 4-hydroxy-tetrahydrodipicolinate synthase (296 aa).

Thr-47 provides a ligand contact to pyruvate. Tyr-135 acts as the Proton donor/acceptor in catalysis. Catalysis depends on Lys-163, which acts as the Schiff-base intermediate with substrate. Residue Ile-205 coordinates pyruvate.

The protein belongs to the DapA family. Homotetramer; dimer of dimers.

The protein localises to the cytoplasm. It carries out the reaction L-aspartate 4-semialdehyde + pyruvate = (2S,4S)-4-hydroxy-2,3,4,5-tetrahydrodipicolinate + H2O + H(+). The protein operates within amino-acid biosynthesis; L-lysine biosynthesis via DAP pathway; (S)-tetrahydrodipicolinate from L-aspartate: step 3/4. Catalyzes the condensation of (S)-aspartate-beta-semialdehyde [(S)-ASA] and pyruvate to 4-hydroxy-tetrahydrodipicolinate (HTPA). In Macrococcus caseolyticus (strain JCSC5402) (Macrococcoides caseolyticum), this protein is 4-hydroxy-tetrahydrodipicolinate synthase.